Reading from the N-terminus, the 860-residue chain is Leucine--tRNA ligase (860 aa).

The 'HIGH' region signature appears at 42–52 (PYPSGRLHMGH). A 'KMSKS' region motif is present at residues 619–623 (KMSKS). An ATP-binding site is contributed by K622.

The protein belongs to the class-I aminoacyl-tRNA synthetase family.

It is found in the cytoplasm. It catalyses the reaction tRNA(Leu) + L-leucine + ATP = L-leucyl-tRNA(Leu) + AMP + diphosphate. This Escherichia coli O7:K1 (strain IAI39 / ExPEC) protein is Leucine--tRNA ligase.